Consider the following 59-residue polypeptide: Large ribosomal subunit protein uL30 (59 aa).

It belongs to the universal ribosomal protein uL30 family. In terms of assembly, part of the 50S ribosomal subunit.

The chain is Large ribosomal subunit protein uL30 from Ruminiclostridium cellulolyticum (strain ATCC 35319 / DSM 5812 / JCM 6584 / H10) (Clostridium cellulolyticum).